A 510-amino-acid polypeptide reads, in one-letter code: D-alanine--D-alanyl carrier protein ligase (510 aa).

157 to 158 (TS) contacts ATP. Residue Asp202 coordinates D-alanine. 297-302 (NTYGPT) is an ATP binding site. Val306 is a D-alanine binding site. Residues Asp389 and Lys498 each contribute to the ATP site. D-alanine is bound at residue Lys498.

The protein belongs to the ATP-dependent AMP-binding enzyme family. DltA subfamily.

It localises to the cytoplasm. The catalysed reaction is holo-[D-alanyl-carrier protein] + D-alanine + ATP = D-alanyl-[D-alanyl-carrier protein] + AMP + diphosphate. It functions in the pathway cell wall biogenesis; lipoteichoic acid biosynthesis. Its function is as follows. Catalyzes the first step in the D-alanylation of lipoteichoic acid (LTA), the activation of D-alanine and its transfer onto the D-alanyl carrier protein (Dcp) DltC. In an ATP-dependent two-step reaction, forms a high energy D-alanyl-AMP intermediate, followed by transfer of the D-alanyl residue as a thiol ester to the phosphopantheinyl prosthetic group of the Dcp. D-alanylation of LTA plays an important role in modulating the properties of the cell wall in Gram-positive bacteria, influencing the net charge of the cell wall. This Listeria monocytogenes serotype 4b (strain CLIP80459) protein is D-alanine--D-alanyl carrier protein ligase.